Here is a 671-residue protein sequence, read N- to C-terminus: DEAD-box ATP-dependent RNA helicase 7 (671 aa).

The tract at residues Met1 to Lys84 is disordered. A compositionally biased stretch (basic and acidic residues) spans Leu26 to Asp41. Phosphoserine occurs at positions 40 and 42. The span at Lys50–Lys60 shows a compositional bias: basic residues. Positions Asn96–Ala124 match the Q motif motif. The Helicase ATP-binding domain occupies Phe127 to Thr309. Ala140–Thr147 contacts ATP. The DEAD box motif lies at Asp255–Asp258. Residues Leu339–Ile479 form the Helicase C-terminal domain. The interval Glu627–Tyr671 is disordered. Residues Phe636–Tyr671 are compositionally biased toward gly residues.

Belongs to the DEAD box helicase family. DDX21/DDX50 subfamily.

It localises to the nucleus. It carries out the reaction ATP + H2O = ADP + phosphate + H(+). The polypeptide is DEAD-box ATP-dependent RNA helicase 7 (RH7) (Arabidopsis thaliana (Mouse-ear cress)).